A 233-amino-acid chain; its full sequence is Ribonuclease 3 (233 aa).

Residues 5-127 (LERLCRKLGY…VIGAVYLDGG (123 aa)) enclose the RNase III domain. Glu-40 lines the Mg(2+) pocket. The active site involves Asp-44. Residues Asp-113 and Glu-116 each coordinate Mg(2+). Residue Glu-116 is part of the active site. One can recognise a DRBM domain in the interval 156 to 226 (DPKTRLQEYL…ATRALALLLA (71 aa)).

It belongs to the ribonuclease III family. Homodimer. Mg(2+) serves as cofactor.

It localises to the cytoplasm. It catalyses the reaction Endonucleolytic cleavage to 5'-phosphomonoester.. In terms of biological role, digests double-stranded RNA. Involved in the processing of primary rRNA transcript to yield the immediate precursors to the large and small rRNAs (23S and 16S). Processes some mRNAs, and tRNAs when they are encoded in the rRNA operon. Processes pre-crRNA and tracrRNA of type II CRISPR loci if present in the organism. The chain is Ribonuclease 3 from Nitrosococcus oceani (strain ATCC 19707 / BCRC 17464 / JCM 30415 / NCIMB 11848 / C-107).